The following is a 210-amino-acid chain: Frataxin, mitochondrial (210 aa).

The transit peptide at 1–41 directs the protein to the mitochondrion; that stretch reads MWTFGRRAVAGLLASPSPAQAQTLARAPRLAELAQLCSRRG.

The protein belongs to the frataxin family. Component of the mitochondrial core iron-sulfur cluster (ISC) complex composed of NFS1, LYRM4, NDUFAB1, ISCU, FXN, and FDX2; this complex is a heterohexamer containing two copies of each monomer. Homodimer. Monomer (probable predominant form). Oligomer. Monomers and polymeric aggregates of &gt;1 MDa have been isolated from mitochondria. A small fraction of heterologous overexpressed recombinant frataxin forms high-molecular weight aggregates that incorporate iron. Interacts with LYRM4. Interacts (via ferrous form) with ISCU; the interaction is possible when both are bound to the dimeric form of the cysteine desulfurase complex (NFS1:LYRM4) and the interaction enhances FXN interaction to the dimeric form of the cysteine desulfurase complex (NFS1:LYRM4). Interacts with FECH; one iron-bound FXN monomer seems to interact with a FECH homodimer. Interacts with SDHA and SDHB. Interacts with ACO2; the interaction is dependent on citrate. Interacts with HSPA9. As to quaternary structure, interacts with ACO1. Interacts with ISCU (cytoplasmic form). Post-translationally, processed in two steps by mitochondrial processing peptidase (MPP). MPP first cleaves the precursor to intermediate form and subsequently converts the intermediate to yield frataxin mature form (frataxin(81-210)) which is the predominant form. The additional forms, frataxin(56-210) and frataxin(78-210), seem to be produced when the normal maturation process is impaired; their physiological relevance is unsure.

Its subcellular location is the mitochondrion. The protein resides in the cytoplasm. It localises to the cytosol. The catalysed reaction is 4 Fe(2+) + O2 + 4 H(+) = 4 Fe(3+) + 2 H2O. Functionally, functions as an activator of persulfide transfer to the scaffoding protein ISCU as component of the core iron-sulfur cluster (ISC) assembly complex and participates to the [2Fe-2S] cluster assembly. Accelerates sulfur transfer from NFS1 persulfide intermediate to ISCU and to small thiols such as L-cysteine and glutathione leading to persulfuration of these thiols and ultimately sulfide release. Binds ferrous ion and is released from FXN upon the addition of both L-cysteine and reduced FDX2 during [2Fe-2S] cluster assembly. The core iron-sulfur cluster (ISC) assembly complex is involved in the de novo synthesis of a [2Fe-2S] cluster, the first step of the mitochondrial iron-sulfur protein biogenesis. This process is initiated by the cysteine desulfurase complex (NFS1:LYRM4:NDUFAB1) that produces persulfide which is delivered on the scaffold protein ISCU in a FXN-dependent manner. Then this complex is stabilized by FDX2 which provides reducing equivalents to accomplish the [2Fe-2S] cluster assembly. Finally, the [2Fe-2S] cluster is transferred from ISCU to chaperone proteins, including HSCB, HSPA9 and GLRX5. May play a role in the protection against iron-catalyzed oxidative stress through its ability to catalyze the oxidation of Fe(2+) to Fe(3+); the oligomeric form but not the monomeric form has in vitro ferroxidase activity. May be able to store large amounts of iron in the form of a ferrihydrite mineral by oligomerization; however, the physiological relevance is unsure as reports are conflicting and the function has only been shown using heterologous overexpression systems. May function as an iron chaperone protein that protects the aconitase [4Fe-4S]2+ cluster from disassembly and promotes enzyme reactivation. May play a role as a high affinity iron binding partner for FECH that is capable of both delivering iron to ferrochelatase and mediating the terminal step in mitochondrial heme biosynthesis. Its function is as follows. Modulates the RNA-binding activity of ACO1. May be involved in the cytoplasmic iron-sulfur protein biogenesis. May contribute to oxidative stress resistance and overall cell survival. The polypeptide is Frataxin, mitochondrial (Macaca fascicularis (Crab-eating macaque)).